We begin with the raw amino-acid sequence, 146 residues long: Large ribosomal subunit protein uL13 (146 aa).

The protein belongs to the universal ribosomal protein uL13 family. In terms of assembly, part of the 50S ribosomal subunit.

Functionally, this protein is one of the early assembly proteins of the 50S ribosomal subunit, although it is not seen to bind rRNA by itself. It is important during the early stages of 50S assembly. The sequence is that of Large ribosomal subunit protein uL13 from Spiroplasma citri.